Consider the following 729-residue polypeptide: Rho GTPase-activating protein 28 (729 aa).

Disordered regions lie at residues 20–42 (AQPPNAESRCAPRAAASHPLSRK) and 55–105 (SNES…AEVT). A compositionally biased stretch (polar residues) spans 65-75 (SRSNSEASVDS). Residue S72 is modified to Phosphoserine. Basic and acidic residues predominate over residues 80-89 (DFWREIESIK). T159 bears the Phosphothreonine mark. Residues 176-236 (GVSESPPRDT…SQDKEGSFAV (61 aa)) form a disordered region. The segment covering 195-204 (GTKEERELPR) has biased composition (basic and acidic residues). Residues 217–226 (SLNSTTLSDA) are compositionally biased toward polar residues. The region spanning 380-577 (VPLTVLLDGD…LMLKYQKILW (198 aa)) is the Rho-GAP domain. A disordered region spans residues 612–631 (TLERETASPKTSKVLQKSPS). Positions 619–630 (SPKTSKVLQKSP) are enriched in polar residues.

As to expression, expressed in testis. Expressed at moderate level in kidney and ovary, and weakly expressed in spleen and skeletal muscle.

Its function is as follows. GTPase activator for the Rho-type GTPases by converting them to an inactive GDP-bound state. The polypeptide is Rho GTPase-activating protein 28 (ARHGAP28) (Homo sapiens (Human)).